Reading from the N-terminus, the 461-residue chain is Argininosuccinate lyase (461 aa).

Belongs to the lyase 1 family. Argininosuccinate lyase subfamily.

It localises to the cytoplasm. The catalysed reaction is 2-(N(omega)-L-arginino)succinate = fumarate + L-arginine. It functions in the pathway amino-acid biosynthesis; L-arginine biosynthesis; L-arginine from L-ornithine and carbamoyl phosphate: step 3/3. The protein is Argininosuccinate lyase of Chloroflexus aurantiacus (strain ATCC 29366 / DSM 635 / J-10-fl).